The sequence spans 428 residues: MCLELDNNLSDYFKACTYAYYSDYENFIKYYDNEELFDEDDLNFHLCIGIRNSYNFAVKMENSGLKLTSGILSSISARYIMSNKVCDFNFKYLPSGIWYPNVPTKETCIYLLEKDPKYSLVIKTICVLLGWDDVCDKCDKICTEVCFRLSIIFNRRSFCEEDTIYNYKIHENKNILEKVEKDKYLLPETILRNKDTTLEIFFKYNYTSKQSNIEQIIDDMLYTYIDYSQNTEFGPMDCVSVDKSVYYNMVSYKPYLDININTVEFNFLNSAYVLKHHKEYPDDLCKKAVLNLLVNDIYDSNFVSLYRPFYFYTYKTLNKYMVQKLLIDFPRQRYAILVNYAIMNITEDLENYSPDIDLIRIAYASGSIEFYNIMMNKAKKEGGMCQHLDFENEKYIFKYHKYEDVDFDNLHKNNGHPLLLRATHLNFP.

3 N-linked (GlcNAc...) asparagine glycosylation sites follow: Asn-8, Asn-205, and Asn-344.

Not known. This Kluyveromyces lactis (strain ATCC 8585 / CBS 2359 / DSM 70799 / NBRC 1267 / NRRL Y-1140 / WM37) (Yeast) protein is RF4 protein (RF4).